We begin with the raw amino-acid sequence, 507 residues long: ATP synthase subunit alpha, chloroplastic (507 aa).

Residue 170–177 participates in ATP binding; it reads GDRQTGKT.

It belongs to the ATPase alpha/beta chains family. In terms of assembly, F-type ATPases have 2 components, CF(1) - the catalytic core - and CF(0) - the membrane proton channel. CF(1) has five subunits: alpha(3), beta(3), gamma(1), delta(1), epsilon(1). CF(0) has four main subunits: a, b, b' and c.

The protein resides in the plastid. It localises to the chloroplast thylakoid membrane. It catalyses the reaction ATP + H2O + 4 H(+)(in) = ADP + phosphate + 5 H(+)(out). Produces ATP from ADP in the presence of a proton gradient across the membrane. The alpha chain is a regulatory subunit. The protein is ATP synthase subunit alpha, chloroplastic of Nymphaea alba (White water-lily).